We begin with the raw amino-acid sequence, 185 residues long: Translation initiation factor IF-3 (185 aa).

The protein belongs to the IF-3 family. In terms of assembly, monomer.

The protein localises to the cytoplasm. Its function is as follows. IF-3 binds to the 30S ribosomal subunit and shifts the equilibrium between 70S ribosomes and their 50S and 30S subunits in favor of the free subunits, thus enhancing the availability of 30S subunits on which protein synthesis initiation begins. The protein is Translation initiation factor IF-3 of Rickettsia prowazekii (strain Madrid E).